Reading from the N-terminus, the 61-residue chain is Large ribosomal subunit protein uL30 (61 aa).

Belongs to the universal ribosomal protein uL30 family. As to quaternary structure, part of the 50S ribosomal subunit.

The polypeptide is Large ribosomal subunit protein uL30 (Colwellia psychrerythraea (strain 34H / ATCC BAA-681) (Vibrio psychroerythus)).